A 219-amino-acid chain; its full sequence is Large ribosomal subunit protein uL1 (219 aa).

The protein belongs to the universal ribosomal protein uL1 family. As to quaternary structure, part of the 50S ribosomal subunit.

Its function is as follows. Probably involved in E site tRNA release. Binds directly to 23S rRNA. Protein L1 is also a translational repressor protein, it controls the translation of its operon by binding to its mRNA. In Methanocaldococcus jannaschii (strain ATCC 43067 / DSM 2661 / JAL-1 / JCM 10045 / NBRC 100440) (Methanococcus jannaschii), this protein is Large ribosomal subunit protein uL1.